A 665-amino-acid polypeptide reads, in one-letter code: Protein phosphatase 1 regulatory subunit 21 (665 aa).

Coiled coils occupy residues 1–84, 125–206, 426–477, and 586–627; these read MTDL…SESK, LEAQ…RKYQ, ESRE…EAQV, and KRLA…EDQL.

Component of the FERRY complex.

It is found in the early endosome. In terms of biological role, component of the FERRY complex (Five-subunit Endosomal Rab5 and RNA/ribosome intermediary). The FERRY complex directly interacts with mRNAs and RAB5A, and functions as a RAB5A effector involved in the localization and the distribution of specific mRNAs most likely by mediating their endosomal transport. The complex recruits mRNAs and ribosomes to early endosomes through direct mRNA-interaction. Putative regulator of protein phosphatase 1 (PP1) activity. May play a role in the endosomal sorting process or in endosome maturation pathway. The polypeptide is Protein phosphatase 1 regulatory subunit 21 (ppp1r21) (Danio rerio (Zebrafish)).